A 428-amino-acid polypeptide reads, in one-letter code: Elongation factor 1-alpha (428 aa).

One can recognise a tr-type G domain in the interval 5–215 (KPHVNIVFIG…ALDQIPEPPK (211 aa)). The interval 14–21 (GHVDHGKS) is G1. GTP is bound at residue 14 to 21 (GHVDHGKS). Mg(2+) is bound at residue serine 21. Residues 68–72 (GITID) are G2. The interval 89–92 (DAPG) is G3. GTP contacts are provided by residues 89–93 (DAPGH) and 144–147 (NKMD). Residues 144–147 (NKMD) form a G4 region. The interval 181–183 (SAW) is G5.

This sequence belongs to the TRAFAC class translation factor GTPase superfamily. Classic translation factor GTPase family. EF-Tu/EF-1A subfamily.

The protein resides in the cytoplasm. The enzyme catalyses GTP + H2O = GDP + phosphate + H(+). Its function is as follows. GTP hydrolase that promotes the GTP-dependent binding of aminoacyl-tRNA to the A-site of ribosomes during protein biosynthesis. The sequence is that of Elongation factor 1-alpha from Thermococcus kodakarensis (strain ATCC BAA-918 / JCM 12380 / KOD1) (Pyrococcus kodakaraensis (strain KOD1)).